The primary structure comprises 430 residues: Enolase (430 aa).

Residue Q163 coordinates (2R)-2-phosphoglycerate. E205 (proton donor) is an active-site residue. 3 residues coordinate Mg(2+): D242, E287, and D314. The (2R)-2-phosphoglycerate site is built by K339, R368, S369, and K390. Residue K339 is the Proton acceptor of the active site.

Belongs to the enolase family. It depends on Mg(2+) as a cofactor.

The protein resides in the cytoplasm. It localises to the secreted. It is found in the cell surface. The enzyme catalyses (2R)-2-phosphoglycerate = phosphoenolpyruvate + H2O. The protein operates within carbohydrate degradation; glycolysis; pyruvate from D-glyceraldehyde 3-phosphate: step 4/5. Its function is as follows. Catalyzes the reversible conversion of 2-phosphoglycerate (2-PG) into phosphoenolpyruvate (PEP). It is essential for the degradation of carbohydrates via glycolysis. In Geobacillus kaustophilus (strain HTA426), this protein is Enolase.